A 252-amino-acid chain; its full sequence is ATP synthase subunit a (252 aa).

The next 5 membrane-spanning stretches (helical) occupy residues glycine 33 to alanine 53, valine 92 to valine 112, aspartate 130 to leucine 150, leucine 196 to leucine 216, and glycine 217 to glycine 237.

Belongs to the ATPase A chain family. As to quaternary structure, F-type ATPases have 2 components, CF(1) - the catalytic core - and CF(0) - the membrane proton channel. CF(1) has five subunits: alpha(3), beta(3), gamma(1), delta(1), epsilon(1). CF(0) has three main subunits: a(1), b(2) and c(9-12). The alpha and beta chains form an alternating ring which encloses part of the gamma chain. CF(1) is attached to CF(0) by a central stalk formed by the gamma and epsilon chains, while a peripheral stalk is formed by the delta and b chains.

Its subcellular location is the cellular thylakoid membrane. Its function is as follows. Key component of the proton channel; it plays a direct role in the translocation of protons across the membrane. This is ATP synthase subunit a from Synechococcus sp. (strain PCC 6716).